The sequence spans 66 residues: Putative transmembrane protein ORF66 (66 aa).

The Cytoplasmic segment spans residues 1–6 (MSDVDD). A helical membrane pass occupies residues 7-27 (TIVDSIAIVGAILIGIFLIVV). The Extracellular portion of the chain corresponds to 28 to 39 (SVSNTSLFNNTE). Residues 40 to 60 (YDSMINSVLVIISSVIAYTLG) form a helical membrane-spanning segment. Topologically, residues 61-66 (KRRSKS) are cytoplasmic.

The protein resides in the host membrane. In Acidianus filamentous virus 2 (isolate Italy/Pozzuoli) (AFV-2), this protein is Putative transmembrane protein ORF66.